The sequence spans 151 residues: Small ribosomal subunit protein uS19 (151 aa).

This sequence belongs to the universal ribosomal protein uS19 family.

The polypeptide is Small ribosomal subunit protein uS19 (RPS15) (Picea mariana (Black spruce)).